Here is a 209-residue protein sequence, read N- to C-terminus: UPF0319 protein VFMJ11_1730 (209 aa).

The first 21 residues, Met-1–Ala-21, serve as a signal peptide directing secretion.

The protein belongs to the UPF0319 family.

The sequence is that of UPF0319 protein VFMJ11_1730 from Aliivibrio fischeri (strain MJ11) (Vibrio fischeri).